The sequence spans 149 residues: Calmodulin-like protein 3 (149 aa).

EF-hand domains follow at residues 8–43 (EQIA…LGQN), 44–79 (PTEA…KMKD), 81–116 (DSEE…LGEK), and 117–149 (LSDE…LVSK). Positions 21, 23, 25, 27, 32, 57, 59, 61, 63, 68, 94, 96, 98, 105, 130, 132, 134, 136, and 141 each coordinate Ca(2+).

This sequence belongs to the calmodulin family. Interacts with MYO10, the interaction is calcium-dependent and essential for MYO10 function in filopodial extension.

Its function is as follows. May function as a specific light chain of unconventional myosin-10 (MYO10), also enhances MYO10 translation, possibly by acting as a chaperone for the emerging MYO10 heavy chain protein. May compete with calmodulin by binding, with different affinities, to cellular substrates. The sequence is that of Calmodulin-like protein 3 (Calml3) from Mus musculus (Mouse).